The following is a 185-amino-acid chain: Pericyclase pydY (185 aa).

Belongs to the pericyclase pydY family.

It functions in the pathway mycotoxin biosynthesis. In terms of biological role, pericyclase; part of the gene cluster that mediates the biosynthesis of pyrrocidines, fungal natural products containing a macrocyclic para-cyclophane connected to a decahydrofluorene ring system that show potent antibiotic activities toward Gram-negative bacteria. Within the pathway, pydY is involved in the late Diels-Alder cycloaddition step that leads to the formation of the decahydrofluorene core. The pathway begins with the PKS-NRPS pydA which, with the help of the trans-enoyl reductase pydC, synthesizes the polyketide-tyrosyl acyl thioester product which can be reductively off-loaded by the terminal reductase (R) domain in pydA. The alpha/beta hydrolase pydG is then required to catalyze the subsequent Knoevenagel condensation that affords the 3-pyrrolin-2-one ring, whereas the four proteins pydB, pydE, pydX and pydZ then function synergistically to form the cyclophane. PydB and the membrane-bound pydX and pydZ are lipid-binding proteins that can sequester and mold the pdyG product into the inverse S-shape. Binding of the medium chain reductase pydE to the complex would trigger the cascade oxidative cyclization. PydY is involved in the Diels-Alder cycloaddition that forms the decahydrofluorene core. Additional non-enzymatic hydroxylation yields pyrrocidine A2 which can be further reduced into pyrrocidine B by an endogenous reductase. The protein is Pericyclase pydY of Acremonium sp.